Consider the following 411-residue polypeptide: Squalene synthase (411 aa).

NADP(+) contacts are provided by arginine 49 and arginine 74. 3 residues coordinate Mg(2+): aspartate 77, glutamate 80, and aspartate 81. NADP(+)-binding residues include arginine 212, lysine 312, and arginine 314. The chain crosses the membrane as a helical span at residues 388–408; the sequence is SPVLIVVIFIILAIILAQLFG.

It belongs to the phytoene/squalene synthase family. Requires Mg(2+) as cofactor.

The protein localises to the membrane. It carries out the reaction 2 (2E,6E)-farnesyl diphosphate + NADH + H(+) = squalene + 2 diphosphate + NAD(+). The catalysed reaction is 2 (2E,6E)-farnesyl diphosphate + NADPH + H(+) = squalene + 2 diphosphate + NADP(+). In terms of biological role, converts farnesyl diphosphate (FPP) into squalene, a precursor for sterol biosynthesis in eukaryotes. This Solanum lycopersicum (Tomato) protein is Squalene synthase.